The primary structure comprises 170 residues: MKYSQNKSLNTFEIEYKIANKSVKIKSSGKMGVITKELKLKEPAIQSNNIYYLKNHGDSRIIIGTMKQQIQGVLAGFCIELKLVGLGFVVHKVGNTLVLDVGYSHYRSCLIPKEVVVKLEGSQIILYSINKEKVTTFASLLKTFKKINMYKGTGILGINEKIKLKKGKVR.

This sequence belongs to the universal ribosomal protein uL6 family.

The protein localises to the mitochondrion. The sequence is that of Large ribosomal subunit protein uL6m (mrpl6) from Dictyostelium discoideum (Social amoeba).